The following is a 1414-amino-acid chain: Calcium-transporting ATPase 2 (1414 aa).

Disordered stretches follow at residues M1–L231 and A265–A294. At M1–K327 the chain is on the cytoplasmic side. 2 stretches are compositionally biased toward low complexity: residues P33–P53 and S75–S96. Residues D179–K189 show a composition bias toward basic and acidic residues. A compositionally biased stretch (basic residues) spans K190–K201. The span at K202–S229 shows a compositional bias: basic and acidic residues. A helical transmembrane segment spans residues V328–L348. Topologically, residues G349 to D370 are vacuolar. Residues W371–N391 form a helical membrane-spanning segment. Topologically, residues D392–L541 are cytoplasmic. A helical membrane pass occupies residues A542–I562. At R563–Q585 the chain is on the vacuolar side. The chain crosses the membrane as a helical span at residues I586 to V606. V595 and E600 together coordinate Ca(2+). The Cytoplasmic segment spans residues T607–K1040. D642 (4-aspartylphosphate intermediate) is an active-site residue. The Mg(2+) site is built by D642 and T644. ATP contacts are provided by residues T644, E737, R779, T909–D911, R958, and K964. D983 is a binding site for Mg(2+). Residue N986 participates in ATP binding. The helical transmembrane segment at F1041 to V1061 threads the bilayer. N1049 serves as a coordination point for Ca(2+). The Vacuolar segment spans residues A1062–S1068. Residues V1069–A1089 form a helical membrane-spanning segment. 2 residues coordinate Ca(2+): N1079 and D1083. At L1090–K1118 the chain is on the cytoplasmic side. The chain crosses the membrane as a helical span at residues M1119 to L1139. At K1140–E1153 the chain is on the vacuolar side. Residues L1154–L1171 traverse the membrane as a helical segment. At N1172–Y1191 the chain is on the cytoplasmic side. The chain crosses the membrane as a helical span at residues F1192 to A1212. E1208 is a binding site for Ca(2+). Residues A1213–D1223 lie on the Vacuolar side of the membrane. Residues W1224–T1244 traverse the membrane as a helical segment. The Cytoplasmic portion of the chain corresponds to P1245–V1414. The segment at P1376–V1414 is disordered.

Belongs to the cation transport ATPase (P-type) (TC 3.A.3) family.

It localises to the vacuole membrane. It carries out the reaction Ca(2+)(in) + ATP + H2O = Ca(2+)(out) + ADP + phosphate + H(+). This magnesium-dependent enzyme catalyzes the hydrolysis of ATP coupled with the transport of calcium. Transports calcium to the vacuole and participates in the control of cytosolic free calcium. The chain is Calcium-transporting ATPase 2 from Cryptococcus neoformans var. grubii serotype A (strain H99 / ATCC 208821 / CBS 10515 / FGSC 9487) (Filobasidiella neoformans var. grubii).